The primary structure comprises 258 residues: Undecaprenyl-diphosphatase (258 aa).

Transmembrane regions (helical) follow at residues 1–21 (MDFL…FLPV), 42–62 (LKCF…FMFF), 69–89 (FNLW…GFLA), 96–116 (FFEP…FIVV), 135–155 (VSFK…IPGT), 173–193 (EVAA…ATAY), 211–231 (IFLV…KLFL), and 237–257 (FSYI…LIYI).

The protein belongs to the UppP family.

The protein resides in the cell inner membrane. The enzyme catalyses di-trans,octa-cis-undecaprenyl diphosphate + H2O = di-trans,octa-cis-undecaprenyl phosphate + phosphate + H(+). In terms of biological role, catalyzes the dephosphorylation of undecaprenyl diphosphate (UPP). Confers resistance to bacitracin. The polypeptide is Undecaprenyl-diphosphatase (Campylobacter fetus subsp. fetus (strain 82-40)).